We begin with the raw amino-acid sequence, 404 residues long: Ubiquitin-like modifier-activating enzyme 5 (404 aa).

5 residues coordinate ATP: glycine 83, aspartate 104, lysine 127, asparagine 150, and asparagine 184. Zn(2+) contacts are provided by cysteine 226 and cysteine 229. Cysteine 250 serves as the catalytic Glycyl thioester intermediate. 2 residues coordinate Zn(2+): cysteine 303 and cysteine 308. The tract at residues 372 to 393 is disordered; that stretch reads APEKSSETSEETVTAATADETS. The segment covering 382 to 391 has biased composition (low complexity); it reads ETVTAATADE.

It belongs to the ubiquitin-activating E1 family. UBA5 subfamily.

Functionally, E1-like enzyme which activates UFM1. In Drosophila simulans (Fruit fly), this protein is Ubiquitin-like modifier-activating enzyme 5.